The following is a 32-amino-acid chain: Kappa-theraphotoxin-Gr2b (32 aa).

Intrachain disulfides connect Cys-2–Cys-16, Cys-9–Cys-21, and Cys-15–Cys-25.

Belongs to the neurotoxin 30 (phrixotoxin) family. As to expression, expressed by the venom gland.

It localises to the secreted. Its function is as follows. Binds the voltage-sensor domain of the potassium channel KvAP (from the archaeon Aeropyrum pernix) and affects channel gating. The protein is Kappa-theraphotoxin-Gr2b of Grammostola rosea (Chilean rose tarantula).